The sequence spans 328 residues: Ribosomal RNA small subunit methyltransferase C (328 aa).

Belongs to the methyltransferase superfamily. RsmC family. In terms of assembly, monomer.

The protein resides in the cytoplasm. The enzyme catalyses guanosine(1207) in 16S rRNA + S-adenosyl-L-methionine = N(2)-methylguanosine(1207) in 16S rRNA + S-adenosyl-L-homocysteine + H(+). Specifically methylates the guanine in position 1207 of 16S rRNA in the 30S particle. This Pasteurella multocida (strain Pm70) protein is Ribosomal RNA small subunit methyltransferase C.